Consider the following 330-residue polypeptide: Anthranilate phosphoribosyltransferase (330 aa).

5-phospho-alpha-D-ribose 1-diphosphate-binding positions include glycine 79, 82–83 (GD), threonine 87, 89–92 (NIST), 107–115 (KHGNYGVSS), and serine 119. Glycine 79 lines the anthranilate pocket. Mg(2+) is bound at residue serine 91. Asparagine 110 lines the anthranilate pocket. Residue arginine 165 participates in anthranilate binding. Residues aspartate 223 and glutamate 224 each contribute to the Mg(2+) site.

This sequence belongs to the anthranilate phosphoribosyltransferase family. Homodimer. Requires Mg(2+) as cofactor.

The enzyme catalyses N-(5-phospho-beta-D-ribosyl)anthranilate + diphosphate = 5-phospho-alpha-D-ribose 1-diphosphate + anthranilate. The protein operates within amino-acid biosynthesis; L-tryptophan biosynthesis; L-tryptophan from chorismate: step 2/5. Its function is as follows. Catalyzes the transfer of the phosphoribosyl group of 5-phosphorylribose-1-pyrophosphate (PRPP) to anthranilate to yield N-(5'-phosphoribosyl)-anthranilate (PRA). The protein is Anthranilate phosphoribosyltransferase of Flavobacterium psychrophilum (strain ATCC 49511 / DSM 21280 / CIP 103535 / JIP02/86).